A 365-amino-acid chain; its full sequence is Serine protease 40 (365 aa).

The signal sequence occupies residues 1–34 (MCGIRAKKSGLGGYGAGLLAALLGVSFLSQHAQT). N-linked (GlcNAc...) asparagine glycosylation is present at Asn44. The 245-residue stretch at 69-313 (IYGGQIAGAE…FDKWIKDNKK (245 aa)) folds into the Peptidase S1 domain. Cys94 and Cys110 are joined by a disulfide. Catalysis depends on charge relay system residues His109 and Asp159. 3 disulfides stabilise this stretch: Cys193/Cys270, Cys226/Cys249, and Cys260/Cys288. Ser264 functions as the Charge relay system in the catalytic mechanism. A disordered region spans residues 312-343 (KKSSSNSKPGESPHHPGSPENENPEGDNKNQG).

This sequence belongs to the peptidase S1 family. As to expression, expressed in testis. More specifically, abundantly expressed in the haploid round spermatid.

The protein localises to the cytoplasmic vesicle. It is found in the secretory vesicle. Its subcellular location is the acrosome. It localises to the secreted. Functionally, may play an important role in the sperm/egg interaction; released during the acrosome reaction. In Mus musculus (Mouse), this protein is Serine protease 40 (Prss40).